We begin with the raw amino-acid sequence, 448 residues long: GTPase Der (448 aa).

2 EngA-type G domains span residues 3 to 167 (PVIA…EPPE) and 182 to 355 (TRLA…ASAT). GTP is bound by residues 9 to 16 (GRPNVGKS), 56 to 60 (DTGGF), 119 to 122 (NKAE), 188 to 195 (GRPNVGKS), 235 to 239 (DTAGL), and 300 to 303 (NKWD). The KH-like domain maps to 356–440 (RKLPTPQLTR…PMRIELRASH (85 aa)).

Belongs to the TRAFAC class TrmE-Era-EngA-EngB-Septin-like GTPase superfamily. EngA (Der) GTPase family. Associates with the 50S ribosomal subunit.

Its function is as follows. GTPase that plays an essential role in the late steps of ribosome biogenesis. This is GTPase Der from Leptothrix cholodnii (strain ATCC 51168 / LMG 8142 / SP-6) (Leptothrix discophora (strain SP-6)).